The following is a 967-amino-acid chain: Cytosolic carboxypeptidase 2 (967 aa).

One can recognise a Peptidase M14 domain in the interval 330–601; sequence YPYTYSDLQR…HFCDTLLDYC (272 aa). Residues His-396, Glu-399, and His-492 each contribute to the Zn(2+) site. Glu-565 acts as the Proton donor/acceptor in catalysis. Disordered stretches follow at residues 679–706 and 944–967; these read KRRL…LHEA and PGIS…NTMK. Residues 946–967 are compositionally biased toward polar residues; the sequence is ISSSEPHFPNSSEDITVRNTMK.

Belongs to the peptidase M14 family. Zn(2+) is required as a cofactor.

The protein localises to the cytoplasm. It is found in the cytosol. It localises to the cytoskeleton. Its subcellular location is the microtubule organizing center. The protein resides in the centrosome. The protein localises to the centriole. It is found in the cilium basal body. The enzyme catalyses (L-glutamyl)(n+1)-gamma-L-glutamyl-L-glutamyl-[protein] + H2O = (L-glutamyl)(n)-gamma-L-glutamyl-L-glutamyl-[protein] + L-glutamate. Functionally, metallocarboxypeptidase that mediates deglutamylation of target proteins. Catalyzes the deglutamylation of polyglutamate side chains generated by post-translational polyglutamylation in proteins such as tubulins. Also removes gene-encoded polyglutamates from the carboxy-terminus of target proteins such as MYLK. Does not show detyrosinase or deglycylase activities from the carboxy-terminus of tubulin. In terms of biological role, metallocarboxypeptidase that mediates deglutamylation of tubulin and non-tubulin target proteins. Catalyzes the removal of polyglutamate side chains present on the gamma-carboxyl group of glutamate residues within the C-terminal tail of tubulin protein. Specifically cleaves tubulin long-side-chains, while it is not able to remove the branching point glutamate. Also catalyzes the removal of polyglutamate residues from the carboxy-terminus of non-tubulin proteins. The protein is Cytosolic carboxypeptidase 2 (agbl2) of Xenopus tropicalis (Western clawed frog).